A 908-amino-acid chain; its full sequence is Glutamate receptor ionotropic, kainate 2 (908 aa).

The signal sequence occupies residues 1–31; the sequence is MKIIFPILSNPVFRRTVKLLLCLLWIGYSQG. Residues 32–561 lie on the Extracellular side of the membrane; the sequence is TTHVLRFGGI…VFSFLNPLSP (530 aa). Residues N67, N73, N275, N378, N412, N423, and N430 are each glycosylated (N-linked (GlcNAc...) asparagine). Cysteines 96 and 347 form a disulfide. L-glutamate contacts are provided by P516, A518, and R523. N546 carries an N-linked (GlcNAc...) asparagine glycan. The chain crosses the membrane as a helical span at residues 562–582; it reads DIWMYILLAYLGVSCVLFVIA. Residues 583–635 lie on the Cytoplasmic side of the membrane; it reads RFSPYEWYNPHPCNPDSDVVENNFTLLNSFWFGVGALMQQGSELMPKALSTRI. A helical membrane pass occupies residues 636–656; sequence VGGIWWFFTLIIISSYTANLA. The Extracellular portion of the chain corresponds to 657-819; it reads AFLTVERMES…KEASALGVQN (163 aa). L-glutamate-binding residues include A689, T690, and E738. The cysteines at positions 750 and 804 are disulfide-linked. A glycan (N-linked (GlcNAc...) asparagine) is linked at N751. Residues 820 to 840 form a helical membrane-spanning segment; sequence IGGIFIVLAAGLVLSVFVAVG. The Cytoplasmic portion of the chain corresponds to 841–908; that stretch reads EFLYKSKKNA…RRLPGKETMA (68 aa). Phosphoserine; by PKC occurs at positions 846 and 868. A Glycyl lysine isopeptide (Lys-Gly) (interchain with G-Cter in SUMO1) cross-link involves residue K886.

This sequence belongs to the glutamate-gated ion channel (TC 1.A.10.1) family. GRIK2 subfamily. Homotetramer and heterotetramer with GRIK5. Tetramers may be formed by the dimerization of dimers. Assembles into a kainate-gated homomeric channel that does not bind AMPA. Can form functional heteromeric receptors with GRIK5. Can form functional heteromeric receptors with GRIK3 and GRIK4. Interacts with DLG4. Interacts with NETO2. Interacts (via C-terminus) with KLHL17 (via kelch repeats); the interaction targets GRIK2 for degradation via ubiquitin-proteasome pathway. Sumoylation mediates kainate receptor-mediated endocytosis and regulates synaptic transmission. Sumoylation is enhanced by PIAS3 and desumoylated by SENP1. Post-translationally, ubiquitinated. Ubiquitination regulates the GRIK2 levels at the synapse by leading kainate receptor degradation through proteasome. In terms of processing, phosphorylated by PKC at Ser-868 upon agonist activation, this directly enhance sumoylation. As to expression, expression is higher in cerebellum than in cerebral cortex.

The protein localises to the cell membrane. It localises to the postsynaptic cell membrane. The enzyme catalyses Ca(2+)(in) = Ca(2+)(out). It carries out the reaction Na(+)(in) = Na(+)(out). Cold receptor activity activated by temperatures between 10-19 degrees Celsius. Its function is as follows. Ionotropic glutamate receptor that functions as a cation permeable ligand-gated ion channel, gated by L-glutamate and the glutamatergic agonist kainic acid. L-glutamate acts as an excitatory neurotransmitter at many synapses in the central nervous system. Binding of the excitatory neurotransmitter L-glutamate induces a conformation change, leading to the opening of the cation channel, and thereby converts the chemical signal to an electrical impulse. The receptor then desensitizes rapidly and enters a transient inactive state, characterized by the presence of bound agonist. Modulates cell surface expression of NETO2. In association with GRIK3, involved in presynaptic facilitation of glutamate release at hippocampal mossy fiber synapses. Independent of its ionotropic glutamate receptor activity, acts as a thermoreceptor conferring sensitivity to cold temperatures. Functions in dorsal root ganglion neurons. This is Glutamate receptor ionotropic, kainate 2 (GRIK2) from Homo sapiens (Human).